The chain runs to 204 residues: Tetraspanin-13 (204 aa).

At 1–19 (MVCGGFSCSKNCLCALNLL) the chain is on the cytoplasmic side. A helical membrane pass occupies residues 20–40 (YTLVSLLLIGIAAWGIGFGLI). Residues 41-44 (SSLR) lie on the Extracellular side of the membrane. A helical transmembrane segment spans residues 45-65 (VVGVVIAVGIFLFLIALVGLI). The Cytoplasmic portion of the chain corresponds to 66-72 (GAVKHHQ). Residues 73–93 (VLLFFYMIILLLVFIVQFSVS) traverse the membrane as a helical segment. The Extracellular segment spans residues 94–167 (CACLALNREQ…IGEYAGEVLR (74 aa)). Asparagine 113 and asparagine 137 each carry an N-linked (GlcNAc...) asparagine glycan. The residue at position 143 (serine 143) is a Phosphoserine. Residues 168–188 (FVGGIGLFFSFTEILGVWLTY) traverse the membrane as a helical segment. Over 189 to 204 (RYRNQKDPRANPSAFL) the chain is Cytoplasmic.

Belongs to the tetraspanin (TM4SF) family.

It is found in the membrane. In Rattus norvegicus (Rat), this protein is Tetraspanin-13 (Tspan13).